The chain runs to 270 residues: UPF0246 protein Psyc_0554 (270 aa).

The protein belongs to the UPF0246 family.

This is UPF0246 protein Psyc_0554 from Psychrobacter arcticus (strain DSM 17307 / VKM B-2377 / 273-4).